The chain runs to 211 residues: Pyridoxine/pyridoxamine 5'-phosphate oxidase (211 aa).

Residues 7-10 and Lys65 contribute to the substrate site; that span reads RRDY. Residues 60–65, 75–76, Arg81, Lys82, and Gln104 contribute to the FMN site; these read RIVLLK and YT. Substrate contacts are provided by Tyr122, Arg126, and Ser130. Residues 139 to 140 and Trp184 contribute to the FMN site; that span reads QS. A substrate-binding site is contributed by 190–192; sequence RLH. Residue Arg194 participates in FMN binding.

This sequence belongs to the pyridoxamine 5'-phosphate oxidase family. As to quaternary structure, homodimer. Requires FMN as cofactor.

It catalyses the reaction pyridoxamine 5'-phosphate + O2 + H2O = pyridoxal 5'-phosphate + H2O2 + NH4(+). The enzyme catalyses pyridoxine 5'-phosphate + O2 = pyridoxal 5'-phosphate + H2O2. It participates in cofactor metabolism; pyridoxal 5'-phosphate salvage; pyridoxal 5'-phosphate from pyridoxamine 5'-phosphate: step 1/1. The protein operates within cofactor metabolism; pyridoxal 5'-phosphate salvage; pyridoxal 5'-phosphate from pyridoxine 5'-phosphate: step 1/1. Functionally, catalyzes the oxidation of either pyridoxine 5'-phosphate (PNP) or pyridoxamine 5'-phosphate (PMP) into pyridoxal 5'-phosphate (PLP). This chain is Pyridoxine/pyridoxamine 5'-phosphate oxidase, found in Aliivibrio salmonicida (strain LFI1238) (Vibrio salmonicida (strain LFI1238)).